The primary structure comprises 214 residues: Alkaline phosphatase-like protein (214 aa).

The next 3 membrane-spanning stretches (helical) occupy residues Leu48–Leu68, Phe141–Ala161, and Tyr177–Val197.

It belongs to the DedA family.

It localises to the cell membrane. The polypeptide is Alkaline phosphatase-like protein (apl) (Lactococcus lactis subsp. lactis (strain IL1403) (Streptococcus lactis)).